We begin with the raw amino-acid sequence, 2061 residues long: Putative PWWP domain-containing DNA repair factor 4 (2061 aa).

Disordered regions lie at residues 101–211 (TNLG…SRAR), 382–408 (ALGR…RSSV), 541–586 (TPGT…GDGS), 668–694 (PATL…GDGS), 864–910 (PTPG…SERS), 1046–1072 (PGTM…GDRS), 1159–1182 (ALHG…RGDS), 1205–1383 (KAIA…RDDK), 1521–1548 (PGAL…DSSP), and 1602–1726 (KKGK…KLAN). Basic and acidic residues-rich tracts occupy residues 133-153 (PRED…KREN) and 162-173 (ESKRALRDDRSQ). Residues 397–408 (TPGTLQGNRSSV) are compositionally biased toward polar residues. A compositionally biased stretch (polar residues) spans 1051-1061 (GDSSTARTATA). The segment covering 1364–1373 (DSSQVHTTIA) has biased composition (polar residues). The segment covering 1639-1648 (LKEETQDSRP) has biased composition (basic and acidic residues). Over residues 1656 to 1665 (PESSPFSGNI) the composition is skewed to polar residues. The region spanning 1756–1817 (RGTMVWFKFQ…KHLDCKEKEK (62 aa)) is the PWWP domain.

This sequence belongs to the PWWP3A family.

The protein is Putative PWWP domain-containing DNA repair factor 4 of Homo sapiens (Human).